The following is a 118-amino-acid chain: Large ribosomal subunit protein uL24c (118 aa).

This sequence belongs to the universal ribosomal protein uL24 family. In terms of assembly, part of the 50S ribosomal subunit.

It localises to the plastid. The protein localises to the organellar chromatophore. Its function is as follows. One of two assembly initiator proteins, it binds directly to the 5'-end of the 23S rRNA, where it nucleates assembly of the 50S subunit. The protein is Large ribosomal subunit protein uL24c (rpl24) of Paulinella chromatophora.